Consider the following 253-residue polypeptide: Sulfoacetaldehyde reductase (253 aa).

6–30 serves as a coordination point for NADP(+); the sequence is FITGATSGFGRAAAHRFAAAGWSLV. Ser139 contacts substrate. Tyr152 acts as the Proton acceptor in catalysis.

The protein belongs to the short-chain dehydrogenases/reductases (SDR) family. In terms of assembly, homodimer and heterotetramer.

It carries out the reaction 2-hydroxyethane-1-sulfonate + NADP(+) = sulfoacetaldehyde + NADPH + H(+). The protein operates within organosulfur degradation. Its function is as follows. Catalyzes the formation of isethionate from 2-sulfoacetaldehyde in the deaminative pathway of taurine. The enzyme is specific for NADPH; NADH is not a substrate. Responsible for most of the activity observed in taurine-grown cells. The sequence is that of Sulfoacetaldehyde reductase (isfD) from Chromohalobacter salexigens (strain ATCC BAA-138 / DSM 3043 / CIP 106854 / NCIMB 13768 / 1H11).